We begin with the raw amino-acid sequence, 522 residues long: Gypsy retrotransposon integrase-like protein 1 (522 aa).

The Integrase catalytic domain occupies 135 to 292 (KVENPWSLVT…TPYFQMFSRN (158 aa)). S502 is modified (phosphoserine).

This chain is Gypsy retrotransposon integrase-like protein 1 (GIN1), found in Pongo abelii (Sumatran orangutan).